We begin with the raw amino-acid sequence, 429 residues long: Glutamate-1-semialdehyde 2,1-aminomutase 2 (429 aa).

At Lys268 the chain carries N6-(pyridoxal phosphate)lysine.

The protein belongs to the class-III pyridoxal-phosphate-dependent aminotransferase family. HemL subfamily. In terms of assembly, homodimer. Pyridoxal 5'-phosphate is required as a cofactor.

It localises to the cytoplasm. It carries out the reaction (S)-4-amino-5-oxopentanoate = 5-aminolevulinate. The protein operates within porphyrin-containing compound metabolism; protoporphyrin-IX biosynthesis; 5-aminolevulinate from L-glutamyl-tRNA(Glu): step 2/2. The sequence is that of Glutamate-1-semialdehyde 2,1-aminomutase 2 from Bacillus cereus (strain AH187).